Reading from the N-terminus, the 387-residue chain is Chaperone protein DnaJ (387 aa).

Residues D6–G70 form the J domain. A CR-type zinc finger spans residues G143 to R225. Zn(2+)-binding residues include C156, C159, C173, C176, C199, C202, C213, and C216. CXXCXGXG motif repeat units lie at residues C156–G163, C173–G180, C199–G206, and C213–G220.

The protein belongs to the DnaJ family. Homodimer. Requires Zn(2+) as cofactor.

It localises to the cytoplasm. Functionally, participates actively in the response to hyperosmotic and heat shock by preventing the aggregation of stress-denatured proteins and by disaggregating proteins, also in an autonomous, DnaK-independent fashion. Unfolded proteins bind initially to DnaJ; upon interaction with the DnaJ-bound protein, DnaK hydrolyzes its bound ATP, resulting in the formation of a stable complex. GrpE releases ADP from DnaK; ATP binding to DnaK triggers the release of the substrate protein, thus completing the reaction cycle. Several rounds of ATP-dependent interactions between DnaJ, DnaK and GrpE are required for fully efficient folding. Also involved, together with DnaK and GrpE, in the DNA replication of plasmids through activation of initiation proteins. The sequence is that of Chaperone protein DnaJ from Lacticaseibacillus paracasei (strain ATCC 334 / BCRC 17002 / CCUG 31169 / CIP 107868 / KCTC 3260 / NRRL B-441) (Lactobacillus paracasei).